Consider the following 698-residue polypeptide: Elongation factor G 2 (698 aa).

The tr-type G domain occupies 8-290; sequence ERYRNIGIMA…AVVDYLPSPV (283 aa). GTP contacts are provided by residues 17–24, 88–92, and 142–145; these read AHIDAGKT, DTPGH, and NKMD.

This sequence belongs to the TRAFAC class translation factor GTPase superfamily. Classic translation factor GTPase family. EF-G/EF-2 subfamily.

The protein localises to the cytoplasm. Functionally, catalyzes the GTP-dependent ribosomal translocation step during translation elongation. During this step, the ribosome changes from the pre-translocational (PRE) to the post-translocational (POST) state as the newly formed A-site-bound peptidyl-tRNA and P-site-bound deacylated tRNA move to the P and E sites, respectively. Catalyzes the coordinated movement of the two tRNA molecules, the mRNA and conformational changes in the ribosome. This is Elongation factor G 2 from Methylococcus capsulatus (strain ATCC 33009 / NCIMB 11132 / Bath).